Reading from the N-terminus, the 272-residue chain is Tryptophan synthase alpha chain (272 aa).

Catalysis depends on proton acceptor residues glutamate 49 and aspartate 60.

It belongs to the TrpA family. Tetramer of two alpha and two beta chains.

The catalysed reaction is (1S,2R)-1-C-(indol-3-yl)glycerol 3-phosphate + L-serine = D-glyceraldehyde 3-phosphate + L-tryptophan + H2O. It participates in amino-acid biosynthesis; L-tryptophan biosynthesis; L-tryptophan from chorismate: step 5/5. Functionally, the alpha subunit is responsible for the aldol cleavage of indoleglycerol phosphate to indole and glyceraldehyde 3-phosphate. The protein is Tryptophan synthase alpha chain of Psychrobacter cryohalolentis (strain ATCC BAA-1226 / DSM 17306 / VKM B-2378 / K5).